A 312-amino-acid chain; its full sequence is Translation initiation factor IF3-2, chloroplastic (312 aa).

The transit peptide at 1–55 (MAGITSSTVGFNAVFTGITKTVSSHSLFSVDSKLCSLRLSKTELSFTNLTPSPRR) directs the protein to the chloroplast. The span at 253–263 (EMIRKPQEPPT) shows a compositional bias: basic and acidic residues. The interval 253 to 312 (EMIRKPQEPPTRKKKKTAENEASASAAEITAEPEPEPEPEPEPEPEPEPEPEPEPLQIDS) is disordered. The span at 272–282 (NEASASAAEIT) shows a compositional bias: low complexity. Residues 283-305 (AEPEPEPEPEPEPEPEPEPEPEP) are compositionally biased toward acidic residues.

This sequence belongs to the IF-3 family. Monomer. In terms of tissue distribution, highly expressed in young, newly emerged leaves.

Its subcellular location is the plastid. The protein localises to the chloroplast. Chloroplast translation initiation factor that is essential for the coordination of leaf and chloroplast development. IF-3 binds to the 30S ribosomal subunit and shifts the equilibrium between 70S ribosomes and their 50S and 30S subunits in favor of the free subunits, thus enhancing the availability of 30S subunits on which protein synthesis initiation begins. The chain is Translation initiation factor IF3-2, chloroplastic from Arabidopsis thaliana (Mouse-ear cress).